Reading from the N-terminus, the 509-residue chain is Probable basic-leucine zipper transcription factor H (509 aa).

The segment at 1–42 is disordered; sequence MMNSPRSLDSSDGSVDSSSVYSGTSSFGSSFTSSTGSGFTNS. Residues 10-39 are compositionally biased toward low complexity; that stretch reads SSDGSVDSSSVYSGTSSFGSSFTSSTGSGF. Residues 50–113 enclose the bZIP domain; the sequence is AKKKKIRQMQ…NENYLKINQL (64 aa). Positions 51–77 are basic motif; that stretch reads KKKKIRQMQNRQSAAQYRERKKEYLEK. The leucine-zipper stretch occupies residues 78–99; that stretch reads LETIVDNLESDRNQLLQQTKQL. Disordered regions lie at residues 134–185, 223–275, 290–414, and 465–509; these read LLSK…SNNG, FSHL…SRFN, IENV…IINN, and SNNN…GIPK. Low complexity-rich tracts occupy residues 226 to 248, 255 to 269, 292 to 350, 361 to 414, 465 to 483, and 490 to 509; these read LQQQQQQQPQQQNSPQILQSPIP, PIQQISPSSPNQNIN, NVNN…SNRS, QQQQ…IINN, SNNNNSNNNNSGLENNSPS, and NGGINNISSGNLNSLKGIPK.

The protein belongs to the bZIP family.

It is found in the nucleus. Functionally, probable transcriptional regulator. In Dictyostelium discoideum (Social amoeba), this protein is Probable basic-leucine zipper transcription factor H (bzpH).